Reading from the N-terminus, the 242-residue chain is tRNA (guanine-N(1)-)-methyltransferase (242 aa).

Residues Gly111 and 130-135 (IGDYVL) contribute to the S-adenosyl-L-methionine site.

The protein belongs to the RNA methyltransferase TrmD family. Homodimer.

The protein resides in the cytoplasm. It carries out the reaction guanosine(37) in tRNA + S-adenosyl-L-methionine = N(1)-methylguanosine(37) in tRNA + S-adenosyl-L-homocysteine + H(+). In terms of biological role, specifically methylates guanosine-37 in various tRNAs. The protein is tRNA (guanine-N(1)-)-methyltransferase of Aster yellows witches'-broom phytoplasma (strain AYWB).